The chain runs to 163 residues: Cyanate hydratase (163 aa).

Active-site residues include Arg-103, Glu-106, and Ser-129.

It belongs to the cyanase family.

The catalysed reaction is cyanate + hydrogencarbonate + 3 H(+) = NH4(+) + 2 CO2. Functionally, catalyzes the reaction of cyanate with bicarbonate to produce ammonia and carbon dioxide. The protein is Cyanate hydratase of Ajellomyces dermatitidis (strain ER-3 / ATCC MYA-2586) (Blastomyces dermatitidis).